We begin with the raw amino-acid sequence, 327 residues long: Probable 6-phosphogluconolactonase 3, chloroplastic (327 aa).

Low complexity-rich tracts occupy residues 1–29 (MSAS…PASR) and 43–66 (VASR…PGGA). Positions 1 to 66 (MSASAAVSST…VYATASPGGA (66 aa)) are disordered. Residues 1-71 (MSASAAVSST…SPGGAGGTTA (71 aa)) constitute a chloroplast transit peptide.

Belongs to the glucosamine/galactosamine-6-phosphate isomerase family. 6-phosphogluconolactonase subfamily.

It is found in the plastid. Its subcellular location is the chloroplast. The enzyme catalyses 6-phospho-D-glucono-1,5-lactone + H2O = 6-phospho-D-gluconate + H(+). It participates in carbohydrate degradation; pentose phosphate pathway; D-ribulose 5-phosphate from D-glucose 6-phosphate (oxidative stage): step 2/3. Functionally, hydrolysis of 6-phosphogluconolactone to 6-phosphogluconate. This Oryza sativa subsp. indica (Rice) protein is Probable 6-phosphogluconolactonase 3, chloroplastic.